The chain runs to 262 residues: Cytochrome c oxidase subunit 3 (262 aa).

7 helical membrane passes run 16 to 36 (PWPLTGAIGAMTTVTGLVQWF), 42 to 59 (TLFLLGNIITMLTMYQWW), 83 to 103 (GMILFIISEVFFFISFFWAFF), 128 to 148 (FQIPLLNTAILLASGVTVTWA), 163 to 183 (SLFFTVLLGIYFSILQAYEYI), 198 to 218 (FFVATGFHGLHVLIGTSFLLI), and 240 to 260 (AWYWHFVDVVWLFLYISIYWW).

This sequence belongs to the cytochrome c oxidase subunit 3 family. As to quaternary structure, component of the cytochrome c oxidase (complex IV, CIV), a multisubunit enzyme composed of a catalytic core of 3 subunits and several supernumerary subunits. The complex exists as a monomer or a dimer and forms supercomplexes (SCs) in the inner mitochondrial membrane with ubiquinol-cytochrome c oxidoreductase (cytochrome b-c1 complex, complex III, CIII).

The protein resides in the mitochondrion inner membrane. The enzyme catalyses 4 Fe(II)-[cytochrome c] + O2 + 8 H(+)(in) = 4 Fe(III)-[cytochrome c] + 2 H2O + 4 H(+)(out). Component of the cytochrome c oxidase, the last enzyme in the mitochondrial electron transport chain which drives oxidative phosphorylation. The respiratory chain contains 3 multisubunit complexes succinate dehydrogenase (complex II, CII), ubiquinol-cytochrome c oxidoreductase (cytochrome b-c1 complex, complex III, CIII) and cytochrome c oxidase (complex IV, CIV), that cooperate to transfer electrons derived from NADH and succinate to molecular oxygen, creating an electrochemical gradient over the inner membrane that drives transmembrane transport and the ATP synthase. Cytochrome c oxidase is the component of the respiratory chain that catalyzes the reduction of oxygen to water. Electrons originating from reduced cytochrome c in the intermembrane space (IMS) are transferred via the dinuclear copper A center (CU(A)) of subunit 2 and heme A of subunit 1 to the active site in subunit 1, a binuclear center (BNC) formed by heme A3 and copper B (CU(B)). The BNC reduces molecular oxygen to 2 water molecules using 4 electrons from cytochrome c in the IMS and 4 protons from the mitochondrial matrix. This is Cytochrome c oxidase subunit 3 from Aedes aegypti (Yellowfever mosquito).